The chain runs to 1576 residues: ABC transporter ALT5 (1576 aa).

The next 10 helical transmembrane spans lie at 27 to 47, 72 to 92, 99 to 119, 267 to 287, 289 to 309, 321 to 341, 387 to 407, 417 to 437, 500 to 520, and 525 to 545; these read LKFE…ILAV, ILGF…TQGT, GLFL…VIVC, LPLS…PILP, LVLI…TGFL, GLIG…SLYW, VLAG…AVIV, GFFA…ATVG, ITAM…TLAA, and VATS…APLG. The ABC transmembrane type-1 1 domain occupies 289–556; sequence LVLIGLSISQ…LFQSVAPLMS (268 aa). The ABC transporter 1 domain occupies 602 to 834; the sequence is FRVVNGSFRW…NGGYLQSLCV (233 aa). Position 636-643 (636-643) interacts with ATP; sequence GPVGSGKS. The next 7 helical transmembrane spans lie at 915-935, 957-977, 981-1001, 1035-1054, 1060-1078, 1142-1162, and 1171-1191; these read VVAL…FAFP, FWVG…FLTM, VTSI…AAIM, LIQF…VLAA, AAMY…KLYL, WLLF…VTLV, and GFAG…ASAM. One can recognise an ABC transmembrane type-1 2 domain in the interval 919–1199; the sequence is VAFLASAICY…AMQSYAKLET (281 aa). Residues 1236–1567 enclose the ABC transporter 2 domain; sequence IKLDGVSASY…SHSKFRALCE (332 aa). 1278 to 1285 is an ATP binding site; that stretch reads GRSGSGKS.

It belongs to the ABC transporter superfamily. ABCC family. Conjugate transporter (TC 3.A.1.208) subfamily.

It localises to the cell membrane. ABC transporter that may provide the dual role AAL-toxin export and self-protection by allowing the fungus to evade the harmful effect of its own AAL-toxin production. The sequence is that of ABC transporter ALT5 from Alternaria alternata (Alternaria rot fungus).